We begin with the raw amino-acid sequence, 434 residues long: Nicotinate phosphoribosyltransferase (434 aa).

Residue His242 is modified to Phosphohistidine; by autocatalysis.

It belongs to the NAPRTase family. Post-translationally, transiently phosphorylated on a His residue during the reaction cycle. Phosphorylation strongly increases the affinity for substrates and increases the rate of nicotinate D-ribonucleotide production. Dephosphorylation regenerates the low-affinity form of the enzyme, leading to product release.

The catalysed reaction is nicotinate + 5-phospho-alpha-D-ribose 1-diphosphate + ATP + H2O = nicotinate beta-D-ribonucleotide + ADP + phosphate + diphosphate. The protein operates within cofactor biosynthesis; NAD(+) biosynthesis; nicotinate D-ribonucleotide from nicotinate: step 1/1. Catalyzes the synthesis of beta-nicotinate D-ribonucleotide from nicotinate and 5-phospho-D-ribose 1-phosphate at the expense of ATP. The protein is Nicotinate phosphoribosyltransferase of Nitrobacter hamburgensis (strain DSM 10229 / NCIMB 13809 / X14).